The chain runs to 100 residues: MSTIPVTIDFSGGAEFLVKAKAQKVQIPADSTLRDVLKFVRDNLVTDVHRINMLLNDDASEVAHGVITLINDTDTGLLLEYDTVIEAGDTITFVSTLHGG.

A 1-thioglycine modification is found at glycine 100. Residue glycine 100 forms a Glycyl lysine isopeptide (Gly-Lys) (interchain with K-? in acceptor proteins) linkage.

Belongs to the URM1 family. C-terminal thiocarboxylation occurs in 2 steps, it is first acyl-adenylated (-COAMP) via the hesA/moeB/thiF part of the MOCS3 homolog, then thiocarboxylated (-COSH) via the rhodanese domain of the MOCS3 homolog.

It localises to the cytoplasm. The protein operates within tRNA modification; 5-methoxycarbonylmethyl-2-thiouridine-tRNA biosynthesis. Its function is as follows. Acts as a sulfur carrier required for 2-thiolation of mcm(5)S(2)U at tRNA wobble positions of cytosolic tRNA(Lys), tRNA(Glu) and tRNA(Gln). Serves as sulfur donor in tRNA 2-thiolation reaction by being thiocarboxylated (-COSH) at its C-terminus by MOCS3. The sulfur is then transferred to tRNA to form 2-thiolation of mcm(5)S(2)U. Also acts as a ubiquitin-like protein (UBL) that is covalently conjugated via an isopeptide bond to lysine residues of target proteins. The thiocarboxylated form serves as substrate for conjugation and oxidative stress specifically induces the formation of UBL-protein conjugates. The sequence is that of Ubiquitin-related modifier 1 homolog from Caenorhabditis elegans.